We begin with the raw amino-acid sequence, 192 residues long: Phosphomevalonate kinase (192 aa).

ATP contacts are provided by residues 17-23 (KRKSGKD) and Arg-141. Asn-170 is a substrate binding site. ATP-binding residues include His-171 and Gln-180.

As to quaternary structure, monomer.

Its subcellular location is the cytoplasm. The protein localises to the cytosol. The catalysed reaction is (R)-5-phosphomevalonate + ATP = (R)-5-diphosphomevalonate + ADP. It participates in isoprenoid biosynthesis; isopentenyl diphosphate biosynthesis via mevalonate pathway; isopentenyl diphosphate from (R)-mevalonate: step 2/3. Catalyzes the reversible ATP-dependent phosphorylation of mevalonate 5-phosphate to produce mevalonate diphosphate and ADP, a key step in the mevalonic acid mediated biosynthesis of isopentenyl diphosphate and other polyisoprenoid metabolites. The chain is Phosphomevalonate kinase (PMVK) from Bos taurus (Bovine).